Consider the following 525-residue polypeptide: Mitoguardin (525 aa).

Residues 26–45 traverse the membrane as a helical segment; the sequence is VVLFSLTAGVALMSVLSRFL. The span at 47-67 shows a compositional bias: basic residues; it reads RRKPPRPPRRARKYTGRRNRN. 2 disordered regions span residues 47–73 and 210–239; these read RRKPPRPPRRARKYTGRRNRNSMRSPN and DEAEEEAGEADDDRRSRKSGSVLSRAGSDP. Residues 211-220 show a composition bias toward acidic residues; sequence EAEEEAGEAD.

This sequence belongs to the mitoguardin family. Interacts with zuc.

Its subcellular location is the mitochondrion outer membrane. Its function is as follows. Regulator of mitochondrial fusion required to maintain neuronal homeostasis. The sequence is that of Mitoguardin from Drosophila melanogaster (Fruit fly).